Here is a 57-residue protein sequence, read N- to C-terminus: Large ribosomal subunit protein bL32 (57 aa).

A compositionally biased stretch (basic residues) spans 1–19 (MATPKFKKSRANTHSRRSQ). The tract at residues 1–20 (MATPKFKKSRANTHSRRSQW) is disordered.

Belongs to the bacterial ribosomal protein bL32 family.

The protein is Large ribosomal subunit protein bL32 of Corynebacterium aurimucosum (strain ATCC 700975 / DSM 44827 / CIP 107346 / CN-1) (Corynebacterium nigricans).